The chain runs to 71 residues: DNA-directed RNA polymerase subunit omega (71 aa).

The protein belongs to the RNA polymerase subunit omega family. As to quaternary structure, the RNAP catalytic core consists of 2 alpha, 1 beta, 1 beta' and 1 omega subunit. When a sigma factor is associated with the core the holoenzyme is formed, which can initiate transcription.

It catalyses the reaction RNA(n) + a ribonucleoside 5'-triphosphate = RNA(n+1) + diphosphate. Its function is as follows. Promotes RNA polymerase assembly. Latches the N- and C-terminal regions of the beta' subunit thereby facilitating its interaction with the beta and alpha subunits. The chain is DNA-directed RNA polymerase subunit omega from Levilactobacillus brevis (strain ATCC 367 / BCRC 12310 / CIP 105137 / JCM 1170 / LMG 11437 / NCIMB 947 / NCTC 947) (Lactobacillus brevis).